The chain runs to 237 residues: Zinc finger AN1 domain-containing stress-associated protein 14 (237 aa).

The tract at residues 1 to 31 (MATKRKCPANGDDGGVADLEPVAGGSFASPP) is disordered. An AN1-type zinc finger spans residues 171 to 217 (QPEANRCATCRRKVGLTGFKCRCGGTFCGGHRYADEHGCGFDYKSSG). Zn(2+)-binding residues include Cys177, Cys180, Cys191, Cys193, Cys198, His201, His207, and Cys209.

Functionally, may be involved in environmental stress response. This chain is Zinc finger AN1 domain-containing stress-associated protein 14 (SAP14), found in Oryza sativa subsp. japonica (Rice).